The sequence spans 131 residues: Chorion class high-cysteine HCB protein 12 (131 aa).

Residues 1 to 21 form the signal peptide; that stretch reads MAAKLIVFVCAIALVAQSVLG. Positions 22-46 are left arm; the sequence is TGCGCCCRGCGCGCGGCGCGCCENF. The interval 47–110 is central domain; it reads RVCSNSAAPT…GNGCVGITRS (64 aa). Residues 111–131 are right arm (Gly-rich tandem repeats); that stretch reads CGGCGCGCGGCGCGCGGCGCC.

It belongs to the chorion protein family.

In terms of biological role, this protein is one of many from the eggshell of the silk moth. This is Chorion class high-cysteine HCB protein 12 from Bombyx mori (Silk moth).